A 325-amino-acid polypeptide reads, in one-letter code: NADH-quinone oxidoreductase subunit H (325 aa).

Helical transmembrane passes span Ile-11–Phe-31, Val-81–Val-101, Ile-114–Gly-134, Leu-154–Phe-174, Val-186–Val-206, Phe-237–Phe-257, Leu-265–Ile-285, and Ile-304–Ala-324.

The protein belongs to the complex I subunit 1 family. In terms of assembly, NDH-1 is composed of 13 different subunits. Subunits NuoA, H, J, K, L, M, N constitute the membrane sector of the complex.

Its subcellular location is the cell inner membrane. The catalysed reaction is a quinone + NADH + 5 H(+)(in) = a quinol + NAD(+) + 4 H(+)(out). Its function is as follows. NDH-1 shuttles electrons from NADH, via FMN and iron-sulfur (Fe-S) centers, to quinones in the respiratory chain. The immediate electron acceptor for the enzyme in this species is believed to be ubiquinone. Couples the redox reaction to proton translocation (for every two electrons transferred, four hydrogen ions are translocated across the cytoplasmic membrane), and thus conserves the redox energy in a proton gradient. This subunit may bind ubiquinone. This chain is NADH-quinone oxidoreductase subunit H, found in Escherichia coli O139:H28 (strain E24377A / ETEC).